A 362-amino-acid chain; its full sequence is MPHNPIRVVVGPANYFSHPGSFNHLHDFFTDEQLSRAVWIYGKRAIAAAQTKLPPAFGLPGAKHILFRGHCSESDVQQLAAESGDDRSVVIGVGGGALLDTAKALARRLGLPFVAVPTIAATCAAWTPLSVWYNDAGQALHYEIFDDANFMVLVEPEIILNAPQQYLLAGIGDTLAKWYEAVVLAPQPETLPLTVRLGINNAQAIRDVLLNSSEQALSDQQNQQLTQSFCDVVDAIIAGGGMVGGLGDRFTRVAAAHAVHNGLTVLPQTEKFLHGTKVAYGILVQSALLGQDDVLAQLTGAYQRFHLPTTLAELEVDINNQAEIDKVIAHTLRPVESIHYLPVTLTPDTLRAAFKKVESFKA.

Zn(2+)-binding residues include Asp-173, His-257, and His-274.

Belongs to the iron-containing alcohol dehydrogenase family. Zn(2+) serves as cofactor.

The enzyme catalyses 2-hydroxybutanoate + NADP(+) = 2-oxobutanoate + NADPH + H(+). It catalyses the reaction 2-hydroxyglutarate + NADP(+) = 2-oxoglutarate + NADPH + H(+). Its function is as follows. Catalyzes the NADPH-dependent reduction of 2-oxoglutarate and 2-oxobutanoate, leading to the respective 2-hydroxycarboxylate. Cannot use NADH instead of NADPH as a redox partner. Do not catalyze the reverse reactions. This is Hydroxycarboxylate dehydrogenase A from Escherichia coli (strain K12).